Consider the following 466-residue polypeptide: ATP synthase subunit beta (466 aa).

Glycine 153–threonine 160 lines the ATP pocket.

Belongs to the ATPase alpha/beta chains family. In terms of assembly, F-type ATPases have 2 components, CF(1) - the catalytic core - and CF(0) - the membrane proton channel. CF(1) has five subunits: alpha(3), beta(3), gamma(1), delta(1), epsilon(1). CF(0) has three main subunits: a(1), b(2) and c(9-12). The alpha and beta chains form an alternating ring which encloses part of the gamma chain. CF(1) is attached to CF(0) by a central stalk formed by the gamma and epsilon chains, while a peripheral stalk is formed by the delta and b chains.

The protein resides in the cell membrane. It carries out the reaction ATP + H2O + 4 H(+)(in) = ADP + phosphate + 5 H(+)(out). Produces ATP from ADP in the presence of a proton gradient across the membrane. The catalytic sites are hosted primarily by the beta subunits. This Clostridium acetobutylicum (strain ATCC 824 / DSM 792 / JCM 1419 / IAM 19013 / LMG 5710 / NBRC 13948 / NRRL B-527 / VKM B-1787 / 2291 / W) protein is ATP synthase subunit beta.